The primary structure comprises 316 residues: L-lactate dehydrogenase (316 aa).

NAD(+) contacts are provided by residues Val-15, Asp-37, Lys-42, Tyr-68, and 82–83; that span reads GL. Substrate-binding positions include Gln-85, Arg-91, and 123-126; that span reads NPVD. Residues 121–123 and Thr-146 each bind NAD(+); that span reads ASN. Substrate is bound at residue 151 to 154; sequence DTSR. Beta-D-fructose 1,6-bisphosphate-binding residues include Arg-156 and His-171. His-178 acts as the Proton acceptor in catalysis. Tyr-222 bears the Phosphotyrosine mark. Residue Thr-231 coordinates substrate.

It belongs to the LDH/MDH superfamily. LDH family. As to quaternary structure, homotetramer.

The protein resides in the cytoplasm. The enzyme catalyses (S)-lactate + NAD(+) = pyruvate + NADH + H(+). Its pathway is fermentation; pyruvate fermentation to lactate; (S)-lactate from pyruvate: step 1/1. With respect to regulation, allosterically activated by fructose 1,6-bisphosphate (FBP). Functionally, catalyzes the conversion of lactate to pyruvate. This chain is L-lactate dehydrogenase, found in Borrelia turicatae (strain 91E135).